We begin with the raw amino-acid sequence, 1457 residues long: Ras guanine nucleotide exchange factor C (1457 aa).

One copy of the RCC1 1 repeat lies at 1-55 (MSVFTFGHGSNGALGLGKITDDTCPTPQKVNYFTEIDKRVKKVACGSYHTVFVTD). Disordered stretches follow at residues 75–196 (FYTS…PLLN), 209–264 (HYES…RINK), 282–313 (EQQQ…DEDP), and 376–404 (QQQL…SLQT). 2 stretches are compositionally biased toward low complexity: residues 83 to 121 (TTTT…KIVN) and 134 to 158 (SNTT…LPPT). Composition is skewed to basic and acidic residues over residues 171 to 188 (IKLD…ELIQ) and 209 to 224 (HYES…KDNE). Residues 225-237 (NENEEDEDDDDDD) show a composition bias toward acidic residues. The span at 238–249 (STIRQNEDKESS) shows a compositional bias: basic and acidic residues. 2 stretches are compositionally biased toward low complexity: residues 283–292 (QQQQPQQPQQ) and 376–403 (QQQL…SSLQ). RCC1 repeat units follow at residues 351 to 401 (GGNV…SSSS), 432 to 483 (WGEL…CYTE), 485 to 549 (GKMY…VLTQ), and 590 to 647 (SGEV…ALVE). The region spanning 650–971 (PKTKLALQLV…QVLLERMNQN (322 aa)) is the DH domain. Over residues 703-715 (LPPSLKGLSGGLP) the composition is skewed to low complexity. Residues 703–762 (LPPSLKGLSGGLPDNANNTIKNGKDKDNHHNGDSNGHHSNGHYHGNGNNGNNSITTSNSI) form a disordered region. A compositionally biased stretch (basic and acidic residues) spans 724–738 (NGKDKDNHHNGDSNG). Residues 739–762 (HHSNGHYHGNGNNGNNSITTSNSI) show a composition bias toward low complexity. Residues 989–1109 (GNPQIMGGSL…SVSQIKLQYF (121 aa)) form the N-terminal Ras-GEF domain. Residues 1127-1210 (LTQNEITTPP…NNNNNNNNLT (84 aa)) are disordered. The stretch at 1138–1211 (LQIQNNNQNN…NNNNNNNLTN (74 aa)) forms a coiled coil. Over residues 1142–1210 (NNNQNNNLEN…NNNNNNNNLT (69 aa)) the composition is skewed to low complexity. The Ras-GEF domain occupies 1232–1454 (QPIEVAQTLT…DDKQAQKISS (223 aa)).

In terms of biological role, promotes the exchange of Ras-bound GDP by GTP. The protein is Ras guanine nucleotide exchange factor C (gefC) of Dictyostelium discoideum (Social amoeba).